Consider the following 125-residue polypeptide: Large ribosomal subunit protein bL17 (125 aa).

It belongs to the bacterial ribosomal protein bL17 family. Part of the 50S ribosomal subunit. Contacts protein L32.

The sequence is that of Large ribosomal subunit protein bL17 from Blochmanniella pennsylvanica (strain BPEN).